A 232-amino-acid chain; its full sequence is Large ribosomal subunit protein uL1 (232 aa).

Belongs to the universal ribosomal protein uL1 family. Part of the 50S ribosomal subunit.

Its function is as follows. Binds directly to 23S rRNA. The L1 stalk is quite mobile in the ribosome, and is involved in E site tRNA release. Functionally, protein L1 is also a translational repressor protein, it controls the translation of the L11 operon by binding to its mRNA. In Stenotrophomonas maltophilia (strain R551-3), this protein is Large ribosomal subunit protein uL1.